A 126-amino-acid polypeptide reads, in one-letter code: Fatty acid-binding protein, liver (126 aa).

A2 is subject to N-acetylalanine. Cholate is bound by residues K77, H99, and Q101.

The protein belongs to the calycin superfamily. Fatty-acid binding protein (FABP) family.

Its subcellular location is the cytoplasm. In terms of biological role, binds free fatty acids and their coenzyme A derivatives, bilirubin, and some other small molecules in the cytoplasm. May be involved in intracellular lipid transport. This Aquarana catesbeiana (American bullfrog) protein is Fatty acid-binding protein, liver (fabp1).